A 141-amino-acid chain; its full sequence is MEDQQRLEEIVNQLNIYQSQVELIQQQMEAVRATISELEILEKTLSDIQGKDGSETLVPVGAGSFIKAELKDTSEVIMSVGAGVAIKKNFEDAMESIKSQKNELESTLQKMGENLRKITDIMMKLSPQAEELLKKVRGSGE.

The protein belongs to the prefoldin subunit alpha family. In terms of assembly, heterohexamer of two alpha and four beta subunits.

It localises to the cytoplasm. Its function is as follows. Molecular chaperone capable of stabilizing a range of proteins. Seems to fulfill an ATP-independent, HSP70-like function in archaeal de novo protein folding. In Methanothermobacter thermautotrophicus (strain ATCC 29096 / DSM 1053 / JCM 10044 / NBRC 100330 / Delta H) (Methanobacterium thermoautotrophicum), this protein is Prefoldin subunit alpha (pfdA).